Consider the following 75-residue polypeptide: Small ribosomal subunit protein bS18 (75 aa).

It belongs to the bacterial ribosomal protein bS18 family. In terms of assembly, part of the 30S ribosomal subunit. Forms a tight heterodimer with protein bS6.

Binds as a heterodimer with protein bS6 to the central domain of the 16S rRNA, where it helps stabilize the platform of the 30S subunit. This chain is Small ribosomal subunit protein bS18 (rbsR), found in Rhodobacter capsulatus (strain ATCC BAA-309 / NBRC 16581 / SB1003).